A 324-amino-acid polypeptide reads, in one-letter code: Geranylgeranyl pyrophosphate synthase dpmpD (324 aa).

Residues Lys50, Arg53, and His82 each contribute to the isopentenyl diphosphate site. Mg(2+) contacts are provided by Asp89 and Asp93. Arg98 contacts dimethylallyl diphosphate. Arg99 contacts isopentenyl diphosphate. Residues Lys176, Thr177, and Gln210 each contribute to the dimethylallyl diphosphate site. Position 213 (Asp213) interacts with Mg(2+). The dimethylallyl diphosphate site is built by Asn217, Lys227, and Lys237.

It belongs to the FPP/GGPP synthase family. The cofactor is Mg(2+).

The enzyme catalyses isopentenyl diphosphate + dimethylallyl diphosphate = (2E)-geranyl diphosphate + diphosphate. The catalysed reaction is isopentenyl diphosphate + (2E)-geranyl diphosphate = (2E,6E)-farnesyl diphosphate + diphosphate. It catalyses the reaction isopentenyl diphosphate + (2E,6E)-farnesyl diphosphate = (2E,6E,10E)-geranylgeranyl diphosphate + diphosphate. It participates in secondary metabolite biosynthesis; terpenoid biosynthesis. Geranylgeranyl pyrophosphate synthase; part of the gene cluster that mediates the biosynthesis of diterpenoid pyrones. The first step of the pathway is the synthesis of the alpha-pyrone moiety by the polyketide synthase dpmpA via condensation of one acetyl-CoA starter unit with 3 malonyl-CoA units and 2 methylations. The alpha-pyrone is then combined with geranylgeranyl pyrophosphate (GGPP) formed by the GGPP synthase dpmpD through the action of the prenyltransferase dpmpC to yield a linear alpha-pyrone diterpenoid. Subsequent steps in the diterpenoid pyrone biosynthetic pathway involve the decalin core formation, which is initiated by the epoxidation of the C10-C11 olefin by the FAD-dependent oxidoreductase dpmpE, and is followed by a cyclization cascade catalyzed by the terpene cyclase dpmpB. The short chain dehydrogenase/reductase dpmpG then oxidizes the 8S hydroxy group to a ketone and the short chain dehydrogenase/reductase dpmpH reduces the ketone to the 8R hydroxy group to yield higginsianin B. Higginsianin B is further methylated by the methyltransferase dpmpI to produce the intermediate named FDDP B. The cytochrome P450 monooxygenase dpmpJ then oxidizes the C-26 methyl to primary alcohol, producing the final diterpenoid pyrone with a C-26 primary alcohol on the gamma-pyrone moiety named FDDP C. The chain is Geranylgeranyl pyrophosphate synthase dpmpD from Macrophomina phaseolina (strain MS6) (Charcoal rot fungus).